We begin with the raw amino-acid sequence, 115 residues long: Protein translation factor SUI1 homolog (115 aa).

This sequence belongs to the SUI1 family. As to expression, expressed in all tissues examined.

In terms of biological role, probably involved in translation. The sequence is that of Protein translation factor SUI1 homolog (GOS2) from Oryza sativa subsp. indica (Rice).